Here is a 580-residue protein sequence, read N- to C-terminus: Purine permease (580 aa).

12 helical membrane-spanning segments follow: residues 68–88, 107–127, 136–156, 184–204, 211–231, 263–283, 294–314, 385–405, 426–446, 447–467, 481–501, and 522–542; these read PLVL…AGVI, SQYL…VQMF, YYVG…ITVA, YGAL…LSFM, ALFP…SLIG, LPWG…TIIL, SCAV…CGYF, LGNG…MSVF, CCFF…LVAI, PSSV…ISGV, FILT…DWFS, and LVMA…NLIL.

This sequence belongs to the nucleobase:cation symporter-2 (NCS2) (TC 2.A.40) family.

The protein resides in the membrane. Functionally, able to transport with low efficiency all natural purines as well as purine analogs. This is Purine permease (uapC) from Emericella nidulans (strain FGSC A4 / ATCC 38163 / CBS 112.46 / NRRL 194 / M139) (Aspergillus nidulans).